The sequence spans 608 residues: Elongation factor 4 (608 aa).

The tr-type G domain maps to Ser-11 to Lys-193. Residues Asp-23–Thr-28 and Asn-140–Asp-143 contribute to the GTP site.

This sequence belongs to the TRAFAC class translation factor GTPase superfamily. Classic translation factor GTPase family. LepA subfamily.

The protein resides in the cell inner membrane. The enzyme catalyses GTP + H2O = GDP + phosphate + H(+). Functionally, required for accurate and efficient protein synthesis under certain stress conditions. May act as a fidelity factor of the translation reaction, by catalyzing a one-codon backward translocation of tRNAs on improperly translocated ribosomes. Back-translocation proceeds from a post-translocation (POST) complex to a pre-translocation (PRE) complex, thus giving elongation factor G a second chance to translocate the tRNAs correctly. Binds to ribosomes in a GTP-dependent manner. This is Elongation factor 4 from Rhizobium meliloti (strain 1021) (Ensifer meliloti).